The chain runs to 314 residues: 2,3-dihydroxyphenylpropionate/2,3-dihydroxicinnamic acid 1,2-dioxygenase 1 (314 aa).

The active-site Proton donor is the His-115. His-179 serves as the catalytic Proton acceptor.

Belongs to the LigB/MhpB extradiol dioxygenase family. As to quaternary structure, homotetramer. The cofactor is Fe(2+).

The catalysed reaction is 3-(2,3-dihydroxyphenyl)propanoate + O2 = (2Z,4E)-2-hydroxy-6-oxonona-2,4-dienedioate + H(+). The enzyme catalyses (2E)-3-(2,3-dihydroxyphenyl)prop-2-enoate + O2 = (2Z,4E,7E)-2-hydroxy-6-oxonona-2,4,7-trienedioate + H(+). The protein operates within aromatic compound metabolism; 3-phenylpropanoate degradation. Catalyzes the non-heme iron(II)-dependent oxidative cleavage of 2,3-dihydroxyphenylpropionic acid and 2,3-dihydroxicinnamic acid into 2-hydroxy-6-ketononadienedioate and 2-hydroxy-6-ketononatrienedioate, respectively. The protein is 2,3-dihydroxyphenylpropionate/2,3-dihydroxicinnamic acid 1,2-dioxygenase 1 of Pseudomonas putida (Arthrobacter siderocapsulatus).